Here is a 418-residue protein sequence, read N- to C-terminus: MAARLPACVVDCGTGYTKLGYAGNTEPQFIIPSCIAIKESAKVGDQAQRRLMKGVDDLDFHIGDEAIDKPTYATKWPIRHGIVEDWDLMERFMEQIIFKYLRAEPEDHYFLLTEPPLNTPENREYTAEIMFESFNVPGLYIAVQAVLALAASWTSRQVGERTLTGTVIDSGDGVTHVIPVAEGYVIGSCIKHIPIAGRDITYFIQQLLRDREVGIPPEQSLETAKAVKEKFSYVCPDLVKEFSKYDTDGAKWIKQYMGVNAVSKKEFSIDVGYERFLGPEIFFHPEFANPDFTQPISEVVDEVIQNCPIDVRRPLYKNIVLSGGSTMFRDFGRRLQRDVKRTVDARLKLSEELSGGRLKPKPIDVQVITHHMQRYAVWFGGSMLASTPEFYQVCHTKKDYEEIGPSICRHNPVFGVMS.

The protein belongs to the actin family. ARP3 subfamily. In terms of assembly, component of the Arp2/3 complex composed of actr2/arp2, actr3/arp3, arpc1 (arpc1a or arpc1b), arpc2, arpc3, arpc4 and arpc5.

The protein localises to the cytoplasm. It is found in the cytoskeleton. It localises to the cell projection. The protein resides in the nucleus. ATP-binding component of the Arp2/3 complex, a multiprotein complex that mediates actin polymerization upon stimulation by nucleation-promoting factor (NPF). The Arp2/3 complex mediates the formation of branched actin networks in the cytoplasm, providing the force for cell motility. Seems to contact the pointed end of the daughter actin filament. In addition to its role in the cytoplasmic cytoskeleton, the Arp2/3 complex also promotes actin polymerization in the nucleus, thereby regulating gene transcription and repair of damaged DNA. The Arp2/3 complex promotes homologous recombination (HR) repair in response to DNA damage by promoting nuclear actin polymerization, leading to drive motility of double-strand breaks (DSBs). The sequence is that of Actin-related protein 3-A from Xenopus laevis (African clawed frog).